A 374-amino-acid chain; its full sequence is Fasciclin-like arabinogalactan protein CTB11 (374 aa).

Residues 1-18 (MHFPALAVAGCLLSRATA) form the signal peptide. FAS1 domains follow at residues 19–171 (QSLD…DANM) and 173–302 (LPHN…DGAL). N-linked (GlcNAc...) asparagine glycosylation is found at N52, N72, N120, N132, and N176. Residues 328–348 (ILASHQLTLLAVLAMALVSIL) form a helical membrane-spanning segment.

This sequence belongs to the fasciclin-like AGP family.

It is found in the membrane. The protein operates within mycotoxin biosynthesis. Functionally, fasciclin-like arabinogalactan protein; part of the gene cluster that mediates the biosynthesis of cercosporin, a light-activated, non-host-selective toxin. The perylenequinone chromophore of cercosporin absorbs light energy to attain an electronically-activated triplet state and produces active oxygen species such as the hydroxyl radical, superoxide, hydrogen peroxide or singlet oxygen upon reaction with oxygen molecules. These reactive oxygen species cause damage to various cellular components including lipids, proteins and nucleic acids. The first step of cercosporin biosynthesis is performed by the polyketide synthase CTB1 which catalyzes the formation of nor-toralactone. The starter unit acyltransferase (SAT) domain of CTB1 initiates polyketide extension by the selective utilization of acetyl-CoA, which is elongated to the heptaketide in the beta-ketoacyl synthase (KS) domain by successive condensations with six malonyl units introduced by the malonyl acyltransferase (MAT) domain. The product template (PT) domain catalyzes C4-C9 and C2-C11 aldol cyclizations and dehydrations to a trihydroxynaphthalene, which is thought to be delivered to the thioesterase (TE) domain for product release. The bifunctional enzyme CTB3 then methylates nor-toralactone to toralactone before conducting an unusual oxidative aromatic ring opening. The O-methyltransferase CTB2 further methylates the nascent OH-6 of the CBT3 product, blocking further oxidation at this site before the reductase CTB6 reduces the 2-oxopropyl ketone at position C7, giving naphthalene. The FAD-dependent monooxygenase CTB5 in concert with the multicopper oxidase CTB12 are responsible for homodimerization of naphthalene with CTB7 installing the dioxepine moiety, finally producing cercosporin. The fasciclin domain-containing protein CTB11 might act with CTB5 and CTB12 whereas the roles of CTB9 and CTB10 have still to be elucidated. In Cercospora beticola (Sugarbeet leaf spot fungus), this protein is Fasciclin-like arabinogalactan protein CTB11.